A 323-amino-acid chain; its full sequence is MSNLKQLRTRIKSVKSTQKITKAMQLVSASKMAKIKSQIANSNFYIEAVSKMMSAILSIDMYELSIEEQKFFNTVPNKANLLIVMTSQRGLCGTFNYSIIQQVKNDIKELENKGEQIKLIIIGKKGYEALKRQYVNYIDSYFELPKIHDENLMLQVKQKIMSAVENLEVSNCVIYFNKFKNAMTQIMTRQQILPVAKYQDDSMIDNPIVNLVGFGYKERGAKPINNRSATSDIVGESKSIDYNYEYEGENLISNLINLYVNSQINYALLQSRASEEGARMTAMENATNNANDLISKLVLKLNRSRQAIITTELIEIIAGSEAV.

This sequence belongs to the ATPase gamma chain family. F-type ATPases have 2 components, CF(1) - the catalytic core - and CF(0) - the membrane proton channel. CF(1) has five subunits: alpha(3), beta(3), gamma(1), delta(1), epsilon(1). CF(0) has three main subunits: a, b and c.

It is found in the cell inner membrane. Functionally, produces ATP from ADP in the presence of a proton gradient across the membrane. The gamma chain is believed to be important in regulating ATPase activity and the flow of protons through the CF(0) complex. This chain is ATP synthase gamma chain, found in Rickettsia rickettsii (strain Iowa).